The chain runs to 35 residues: Photosystem II reaction center protein T (35 aa).

The helical transmembrane segment at A3–F23 threads the bilayer.

Belongs to the PsbT family. As to quaternary structure, PSII is composed of 1 copy each of membrane proteins PsbA, PsbB, PsbC, PsbD, PsbE, PsbF, PsbH, PsbI, PsbJ, PsbK, PsbL, PsbM, PsbT, PsbY, PsbZ, Psb30/Ycf12, at least 3 peripheral proteins of the oxygen-evolving complex and a large number of cofactors. It forms dimeric complexes.

Its subcellular location is the plastid. The protein resides in the chloroplast thylakoid membrane. Its function is as follows. Found at the monomer-monomer interface of the photosystem II (PS II) dimer, plays a role in assembly and dimerization of PSII. PSII is a light-driven water plastoquinone oxidoreductase, using light energy to abstract electrons from H(2)O, generating a proton gradient subsequently used for ATP formation. This is Photosystem II reaction center protein T from Stewartia pseudocamellia (Japanese stewartia).